The sequence spans 71 residues: Long neurotoxin 2 (71 aa).

Disulfide bonds link Cys-3–Cys-20, Cys-14–Cys-41, Cys-26–Cys-30, Cys-45–Cys-56, and Cys-57–Cys-62.

Belongs to the three-finger toxin family. Long-chain subfamily. Type II alpha-neurotoxin sub-subfamily. In terms of tissue distribution, expressed by the venom gland.

Its subcellular location is the secreted. Its function is as follows. Binds with high affinity to muscular (alpha-1/CHRNA1) and neuronal (alpha-7/CHRNA7) nicotinic acetylcholine receptor (nAChR) and inhibits acetylcholine from binding to the receptor, thereby impairing neuromuscular and neuronal transmission. This Naja naja (Indian cobra) protein is Long neurotoxin 2.